The sequence spans 128 residues: uncharacterized protein (128 aa).

A disulfide bridge connects residues Cys-10 and Cys-13.

The protein belongs to the ArsC family.

This is an uncharacterized protein from Ureaplasma parvum serovar 3 (strain ATCC 700970).